A 413-amino-acid polypeptide reads, in one-letter code: Putative F-box/kelch-repeat protein At4g22430 (413 aa).

The F-box domain maps to 5–54 (NNTITDVLEGIVTEILVRLPLRSISRFKSVSQTWKSAIESVYFRRLFVSL). The Kelch repeat unit spans residues 168 to 210 (NMFLNKGEMYMPLYVYSSETGFWIHKEVVCPVRLPNFYDPISL).

The sequence is that of Putative F-box/kelch-repeat protein At4g22430 from Arabidopsis thaliana (Mouse-ear cress).